A 499-amino-acid chain; its full sequence is UDP-N-acetylmuramoyl-L-alanyl-D-glutamate--2,6-diaminopimelate ligase (499 aa).

Residue Ser-32 coordinates UDP-N-acetyl-alpha-D-muramoyl-L-alanyl-D-glutamate. 117-123 (GTNGKTT) is an ATP binding site. UDP-N-acetyl-alpha-D-muramoyl-L-alanyl-D-glutamate is bound by residues 159 to 160 (TT), Ser-186, Gln-192, and Arg-194. Lys-226 carries the post-translational modification N6-carboxylysine. Residues Arg-394, 418-421 (DNPR), Gly-469, and Glu-473 contribute to the meso-2,6-diaminopimelate site. The short motif at 418 to 421 (DNPR) is the Meso-diaminopimelate recognition motif element.

Belongs to the MurCDEF family. MurE subfamily. The cofactor is Mg(2+). Post-translationally, carboxylation is probably crucial for Mg(2+) binding and, consequently, for the gamma-phosphate positioning of ATP.

Its subcellular location is the cytoplasm. It catalyses the reaction UDP-N-acetyl-alpha-D-muramoyl-L-alanyl-D-glutamate + meso-2,6-diaminopimelate + ATP = UDP-N-acetyl-alpha-D-muramoyl-L-alanyl-gamma-D-glutamyl-meso-2,6-diaminopimelate + ADP + phosphate + H(+). It participates in cell wall biogenesis; peptidoglycan biosynthesis. In terms of biological role, catalyzes the addition of meso-diaminopimelic acid to the nucleotide precursor UDP-N-acetylmuramoyl-L-alanyl-D-glutamate (UMAG) in the biosynthesis of bacterial cell-wall peptidoglycan. This chain is UDP-N-acetylmuramoyl-L-alanyl-D-glutamate--2,6-diaminopimelate ligase, found in Synechococcus sp. (strain WH7803).